Consider the following 282-residue polypeptide: 2-dehydro-3-deoxyphosphooctonate aldolase (282 aa).

This sequence belongs to the KdsA family.

The protein resides in the cytoplasm. The catalysed reaction is D-arabinose 5-phosphate + phosphoenolpyruvate + H2O = 3-deoxy-alpha-D-manno-2-octulosonate-8-phosphate + phosphate. Its pathway is carbohydrate biosynthesis; 3-deoxy-D-manno-octulosonate biosynthesis; 3-deoxy-D-manno-octulosonate from D-ribulose 5-phosphate: step 2/3. It functions in the pathway bacterial outer membrane biogenesis; lipopolysaccharide biosynthesis. This chain is 2-dehydro-3-deoxyphosphooctonate aldolase, found in Chromobacterium violaceum (strain ATCC 12472 / DSM 30191 / JCM 1249 / CCUG 213 / NBRC 12614 / NCIMB 9131 / NCTC 9757 / MK).